We begin with the raw amino-acid sequence, 280 residues long: MTTHLQAKATLHNGVEMPWFGLGVFQVEEGSELVNAVKTAIVHGYRSIDTAAIYGNEAGVGEGIREGIEEAGISREDLFITSKVWNADLGYEETLAAFETSLSKLGLDYLDLYLIHWPVEGKYKEAWRALETLYKEGRIKAIGVSNFQIHHLEDLMTAAEIKPMINQVEFHPRLTQKELIRYCQNQGIQMEAWSPLMQGQLLDHPVLADIAQTYNKSVAQIILRWDLQHGIITIPKSTKEHRIKENASVFDFELTQDDMNRIDALNENLRVGPDPDNFDF.

Catalysis depends on Y54, which acts as the Proton donor. Residue H116 participates in substrate binding. Position 194–246 (194–246 (SPLMQGQLLDHPVLADIAQTYNKSVAQIILRWDLQHGIITIPKSTKEHRIKEN)) interacts with NADP(+).

It belongs to the aldo/keto reductase family.

This is an uncharacterized protein from Bacillus subtilis (strain 168).